The following is a 271-amino-acid chain: Ribosomal RNA small subunit methyltransferase A (271 aa).

Residues H14, L16, G41, E63, D89, and N107 each coordinate S-adenosyl-L-methionine.

The protein belongs to the class I-like SAM-binding methyltransferase superfamily. rRNA adenine N(6)-methyltransferase family. RsmA subfamily.

It is found in the cytoplasm. It carries out the reaction adenosine(1518)/adenosine(1519) in 16S rRNA + 4 S-adenosyl-L-methionine = N(6)-dimethyladenosine(1518)/N(6)-dimethyladenosine(1519) in 16S rRNA + 4 S-adenosyl-L-homocysteine + 4 H(+). Specifically dimethylates two adjacent adenosines (A1518 and A1519) in the loop of a conserved hairpin near the 3'-end of 16S rRNA in the 30S particle. May play a critical role in biogenesis of 30S subunits. In Lawsonia intracellularis (strain PHE/MN1-00), this protein is Ribosomal RNA small subunit methyltransferase A.